Reading from the N-terminus, the 218-residue chain is Probable carboxylesterase clz11 (218 aa).

The short motif at 7-9 is the Involved in the stabilization of the negatively charged intermediate by the formation of the oxyanion hole element; it reads LVG. The active site involves Ser77.

It belongs to the 'GDXG' lipolytic enzyme family.

The enzyme catalyses a carboxylic ester + H2O = an alcohol + a carboxylate + H(+). The protein operates within secondary metabolite biosynthesis. Its function is as follows. Probable carboxylesterase; part of the gene cluster that mediates the biosynthesis of squalestatin S1 (SQS1, also known as zaragozic acid A), a heavily oxidized fungal polyketide that offers potent cholesterol lowering activity by targeting squalene synthase (SS). SQS1 is composed of a 2,8-dioxobicyclic[3.2.1]octane-3,4,5-tricarboxyclic acid core that is connected to two lipophilic polyketide arms. These initial steps feature the priming of an unusual benzoic acid starter unit onto the highly reducing polyketide synthase clz14, followed by oxaloacetate extension and product release to generate a tricarboxylic acid containing product. The phenylalanine ammonia lyase (PAL) clz10 and the acyl-CoA ligase clz12 are involved in transforming phenylalanine into benzoyl-CoA. The citrate synthase-like protein clz17 is involved in connecting the C-alpha-carbons of the hexaketide chain and oxaloacetate to afford the tricarboxylic acid unit. The potential hydrolytic enzymes, clz11 and clz13, are in close proximity to pks2 and may participate in product release. On the other side, the tetraketide arm is synthesized by a the squalestatin tetraketide synthase clz2 and enzymatically esterified to the core in the last biosynthetic step, by the acetyltransferase clz6. The biosynthesis of the tetraketide must involve 3 rounds of chain extension. After the first and second rounds methyl-transfer occurs, and in all rounds of extension the ketoreductase and dehydratase are active. The enoyl reductase and C-MeT of clz2 are not active in the final round of extension. The acetyltransferase clz6 appears to have a broad substrate selectivity for its acyl CoA substrate, allowing the in vitro synthesis of novel squalestatins. The biosynthesis of SQS1 requires several oxidative steps likely performed by oxidoreductases clz3, clz15 and clz16. Finally, in support of the identification of the cluster as being responsible for SQS1 production, the cluster contains a gene encoding a putative squalene synthase (SS) clz20, suggesting a likely mechanism for self-resistance. This Cochliobolus lunatus (Filamentous fungus) protein is Probable carboxylesterase clz11.